The sequence spans 284 residues: Bifunctional protein FolD (284 aa).

Residues 166-168, Ser-191, and Ile-232 each bind NADP(+); that span reads GAS.

This sequence belongs to the tetrahydrofolate dehydrogenase/cyclohydrolase family. As to quaternary structure, homodimer.

It catalyses the reaction (6R)-5,10-methylene-5,6,7,8-tetrahydrofolate + NADP(+) = (6R)-5,10-methenyltetrahydrofolate + NADPH. The enzyme catalyses (6R)-5,10-methenyltetrahydrofolate + H2O = (6R)-10-formyltetrahydrofolate + H(+). It functions in the pathway one-carbon metabolism; tetrahydrofolate interconversion. Catalyzes the oxidation of 5,10-methylenetetrahydrofolate to 5,10-methenyltetrahydrofolate and then the hydrolysis of 5,10-methenyltetrahydrofolate to 10-formyltetrahydrofolate. The polypeptide is Bifunctional protein FolD (Neisseria meningitidis serogroup B (strain ATCC BAA-335 / MC58)).